The following is a 283-amino-acid chain: Isochorismatase domain-containing protein 1 (283 aa).

It belongs to the isochorismatase family.

The sequence is that of Isochorismatase domain-containing protein 1 (isoc1) from Danio rerio (Zebrafish).